Reading from the N-terminus, the 211-residue chain is PITH domain-containing protein 1 (211 aa).

Positions 20–192 (EPPEQRGLAY…EVTICNYEAS (173 aa)) constitute a PITH domain. Tyrosine 189 bears the Phosphotyrosine mark.

The protein belongs to the PITHD1 family. In terms of tissue distribution, down-regulated in primary acute myeloid leukemia (AML) patients.

It is found in the cytoplasm. In terms of biological role, promotes megakaryocyte differentiation by up-regulating RUNX1 expression. Regulates RUNX1 expression by activating the proximal promoter of the RUNX1 gene and by enhancing the translation activity of an internal ribosome entry site (IRES) element in the RUNX1 gene. The polypeptide is PITH domain-containing protein 1 (PITHD1) (Homo sapiens (Human)).